The sequence spans 272 residues: Formamidopyrimidine-DNA glycosylase (272 aa).

The Schiff-base intermediate with DNA role is filled by Pro2. Catalysis depends on Glu3, which acts as the Proton donor. Catalysis depends on Lys58, which acts as the Proton donor; for beta-elimination activity. His92, Arg111, and Arg153 together coordinate DNA. The FPG-type zinc-finger motif lies at 238 to 272 (AVYGRQGQSCPRCGGLVERCRLGQRSTFFCPACQR). Arg262 functions as the Proton donor; for delta-elimination activity in the catalytic mechanism.

This sequence belongs to the FPG family. In terms of assembly, monomer. It depends on Zn(2+) as a cofactor.

The catalysed reaction is Hydrolysis of DNA containing ring-opened 7-methylguanine residues, releasing 2,6-diamino-4-hydroxy-5-(N-methyl)formamidopyrimidine.. It carries out the reaction 2'-deoxyribonucleotide-(2'-deoxyribose 5'-phosphate)-2'-deoxyribonucleotide-DNA = a 3'-end 2'-deoxyribonucleotide-(2,3-dehydro-2,3-deoxyribose 5'-phosphate)-DNA + a 5'-end 5'-phospho-2'-deoxyribonucleoside-DNA + H(+). Functionally, involved in base excision repair of DNA damaged by oxidation or by mutagenic agents. Acts as a DNA glycosylase that recognizes and removes damaged bases. Has a preference for oxidized purines, such as 7,8-dihydro-8-oxoguanine (8-oxoG). Has AP (apurinic/apyrimidinic) lyase activity and introduces nicks in the DNA strand. Cleaves the DNA backbone by beta-delta elimination to generate a single-strand break at the site of the removed base with both 3'- and 5'-phosphates. The protein is Formamidopyrimidine-DNA glycosylase of Laribacter hongkongensis (strain HLHK9).